The chain runs to 199 residues: 7-methyl-GTP pyrophosphatase (199 aa).

Asp-76 serves as the catalytic Proton acceptor.

It belongs to the Maf family. YceF subfamily. Requires a divalent metal cation as cofactor.

The protein resides in the cytoplasm. The catalysed reaction is N(7)-methyl-GTP + H2O = N(7)-methyl-GMP + diphosphate + H(+). Nucleoside triphosphate pyrophosphatase that hydrolyzes 7-methyl-GTP (m(7)GTP). May have a dual role in cell division arrest and in preventing the incorporation of modified nucleotides into cellular nucleic acids. This Nitrosococcus oceani (strain ATCC 19707 / BCRC 17464 / JCM 30415 / NCIMB 11848 / C-107) protein is 7-methyl-GTP pyrophosphatase.